Consider the following 162-residue polypeptide: Cyclic pyranopterin monophosphate synthase (162 aa).

Substrate contacts are provided by residues 75 to 77 (LCH) and 113 to 114 (ME). Asp-128 is an active-site residue.

This sequence belongs to the MoaC family. In terms of assembly, homohexamer; trimer of dimers.

It catalyses the reaction (8S)-3',8-cyclo-7,8-dihydroguanosine 5'-triphosphate = cyclic pyranopterin phosphate + diphosphate. Its pathway is cofactor biosynthesis; molybdopterin biosynthesis. Its function is as follows. Catalyzes the conversion of (8S)-3',8-cyclo-7,8-dihydroguanosine 5'-triphosphate to cyclic pyranopterin monophosphate (cPMP). In Burkholderia lata (strain ATCC 17760 / DSM 23089 / LMG 22485 / NCIMB 9086 / R18194 / 383), this protein is Cyclic pyranopterin monophosphate synthase.